The following is a 502-amino-acid chain: Mannitol 2-dehydrogenase (502 aa).

37–48 (IVHVGVGGFHRA) contributes to the NAD(+) binding site.

It belongs to the mannitol dehydrogenase family. As to quaternary structure, monomer.

It carries out the reaction D-mannitol + NAD(+) = D-fructose + NADH + H(+). Its function is as follows. Catalyzes the NAD(H)-dependent interconversion of D-fructose and D-mannitol in the mannitol metabolic pathway. The protein is Mannitol 2-dehydrogenase of Aspergillus terreus (strain NIH 2624 / FGSC A1156).